Here is a 427-residue protein sequence, read N- to C-terminus: Histidinol dehydrogenase (427 aa).

Substrate contacts are provided by Ser-232, Gln-254, and His-257. Residues Gln-254 and His-257 each coordinate Zn(2+). Residues Glu-322 and His-323 each act as proton acceptor in the active site. Positions 323, 356, 410, and 415 each coordinate substrate. Residue Asp-356 participates in Zn(2+) binding. His-415 is a binding site for Zn(2+).

It belongs to the histidinol dehydrogenase family. Zn(2+) is required as a cofactor.

It carries out the reaction L-histidinol + 2 NAD(+) + H2O = L-histidine + 2 NADH + 3 H(+). Its pathway is amino-acid biosynthesis; L-histidine biosynthesis; L-histidine from 5-phospho-alpha-D-ribose 1-diphosphate: step 9/9. Functionally, catalyzes the sequential NAD-dependent oxidations of L-histidinol to L-histidinaldehyde and then to L-histidine. The protein is Histidinol dehydrogenase of Listeria monocytogenes serotype 4b (strain F2365).